The sequence spans 364 residues: tRNA 2-selenouridine synthase (364 aa).

The region spanning 14-137 is the Rhodanese domain; sequence LIADTPIIDV…LRQTAIQATI (124 aa). C97 serves as the catalytic S-selanylcysteine intermediate.

This sequence belongs to the SelU family. As to quaternary structure, monomer.

It carries out the reaction 5-methylaminomethyl-2-thiouridine(34) in tRNA + selenophosphate + (2E)-geranyl diphosphate + H2O + H(+) = 5-methylaminomethyl-2-selenouridine(34) in tRNA + (2E)-thiogeraniol + phosphate + diphosphate. The enzyme catalyses 5-methylaminomethyl-2-thiouridine(34) in tRNA + (2E)-geranyl diphosphate = 5-methylaminomethyl-S-(2E)-geranyl-thiouridine(34) in tRNA + diphosphate. The catalysed reaction is 5-methylaminomethyl-S-(2E)-geranyl-thiouridine(34) in tRNA + selenophosphate + H(+) = 5-methylaminomethyl-2-(Se-phospho)selenouridine(34) in tRNA + (2E)-thiogeraniol. It catalyses the reaction 5-methylaminomethyl-2-(Se-phospho)selenouridine(34) in tRNA + H2O = 5-methylaminomethyl-2-selenouridine(34) in tRNA + phosphate. Involved in the post-transcriptional modification of the uridine at the wobble position (U34) of tRNA(Lys), tRNA(Glu) and tRNA(Gln). Catalyzes the conversion of 2-thiouridine (S2U-RNA) to 2-selenouridine (Se2U-RNA). Acts in a two-step process involving geranylation of 2-thiouridine (S2U) to S-geranyl-2-thiouridine (geS2U) and subsequent selenation of the latter derivative to 2-selenouridine (Se2U) in the tRNA chain. The chain is tRNA 2-selenouridine synthase from Shigella flexneri.